The following is an 890-amino-acid chain: Translation initiation factor IF-2 (890 aa).

The tract at residues 45–304 is disordered; the sequence is LIDHLNQKNS…LQQGFQKPAQ (260 aa). Positions 67–81 are enriched in polar residues; the sequence is STLNIPGTGGKSKSV. Basic and acidic residues predominate over residues 92-217; the sequence is VKRDPQEAER…RMAEENKWTD (126 aa). Residues 252–266 are compositionally biased toward basic residues; the sequence is GRGRNAKAARPKKGN. The span at 267–280 shows a compositional bias: basic and acidic residues; sequence KHAESKADREEARA. One can recognise a tr-type G domain in the interval 389 to 558; it reads PRAPVVTIMG…LLQAEVLELK (170 aa). The interval 398–405 is G1; the sequence is GHVDHGKT. 398–405 is a GTP binding site; sequence GHVDHGKT. Residues 423–427 are G2; sequence GITQH. A G3 region spans residues 444 to 447; it reads DTPG. Residues 444–448 and 498–501 each bind GTP; these read DTPGH and NKID. The G4 stretch occupies residues 498–501; the sequence is NKID. Residues 534–536 form a G5 region; sequence SAK. At Lys-808 the chain carries N6-acetyllysine.

Belongs to the TRAFAC class translation factor GTPase superfamily. Classic translation factor GTPase family. IF-2 subfamily.

Its subcellular location is the cytoplasm. Its function is as follows. One of the essential components for the initiation of protein synthesis. Protects formylmethionyl-tRNA from spontaneous hydrolysis and promotes its binding to the 30S ribosomal subunits. Also involved in the hydrolysis of GTP during the formation of the 70S ribosomal complex. This is Translation initiation factor IF-2 from Escherichia coli (strain SMS-3-5 / SECEC).